The primary structure comprises 577 residues: E3 ubiquitin-protein ligase MSL2 (577 aa).

Residues 1–116 form a sufficient for interaction with MSL1 region; the sequence is MNPVNATALY…CEYITQTTLA (116 aa). Positions 44, 47, 62, 64, 67, 70, 81, and 84 each coordinate Zn(2+). The segment at 44 to 85 adopts an RING-type zinc-finger fold; the sequence is CCVCGHLLQDPIAPTNSTCQHYVCKTCKGKKMMMKPSCSWCK. Residue lysine 375 forms a Glycyl lysine isopeptide (Lys-Gly) (interchain with G-Cter in SUMO2) linkage. The tract at residues 405-427 is disordered; it reads TKSMKKSHEHGSKKSHSKTKPGI. Basic residues predominate over residues 407–423; the sequence is SMKKSHEHGSKKSHSKT. Serine 447 carries the phosphoserine modification. A CXC MSL2-type domain is found at 457 to 508; sequence QEKKGCKCGRATQNPSVLTCRGQRCPCYSNRKACLDCICRGCQNSYMANGEK. Zn(2+) is bound by residues cysteine 462, cysteine 464, cysteine 476, cysteine 481, cysteine 483, cysteine 490, cysteine 493, cysteine 495, and cysteine 498.

It belongs to the MSL2 family. Component of a multisubunit histone acetyltransferase complex (MSL) at least composed of the KAT8/MOF/MYST1, MSL1/hampin, MSL2 and MSL3. Forms a MSL heterotetrameric core with MSL1.

Its subcellular location is the nucleus. It is found in the chromosome. The enzyme catalyses S-ubiquitinyl-[E2 ubiquitin-conjugating enzyme]-L-cysteine + [acceptor protein]-L-lysine = [E2 ubiquitin-conjugating enzyme]-L-cysteine + N(6)-ubiquitinyl-[acceptor protein]-L-lysine.. Its pathway is protein modification; protein ubiquitination. In terms of biological role, non-catalytic component of the MSL histone acetyltransferase complex, a multiprotein complex that mediates the majority of histone H4 acetylation at 'Lys-16' (H4K16ac), an epigenetic mark that prevents chromatin compaction. The MSL complex is required for chromosome stability and genome integrity by maintaining homeostatic levels of H4K16ac. The MSL complex is also involved in gene dosage by promoting up-regulation of genes expressed by the X chromosome. X up-regulation is required to compensate for autosomal biallelic expression. The MSL complex also participates in gene dosage compensation by promoting expression of Tsix non-coding RNA. MSL2 plays a key role in gene dosage by ensuring biallelic expression of a subset of dosage-sensitive genes, including many haploinsufficient genes. Acts by promoting promoter-enhancer contacts, thereby preventing DNA methylation of one allele and creating a methylation-free environment for methylation-sensitive transcription factors such as SP1, KANSL1 and KANSL3. Also acts as an E3 ubiquitin ligase that promotes monoubiquitination of histone H2B at 'Lys-35' (H2BK34Ub), but not that of H2A. This activity is greatly enhanced by heterodimerization with MSL1. H2B ubiquitination in turn stimulates histone H3 methylation at 'Lys-4' (H3K4me) and 'Lys-79' (H3K79me) and leads to gene activation, including that of HOXA9 and MEIS1. Also involved in the DNA damage response by mediating ubiquitination of TP53/p53 and TP53BP1. The sequence is that of E3 ubiquitin-protein ligase MSL2 from Homo sapiens (Human).